A 145-amino-acid polypeptide reads, in one-letter code: Transcriptional regulator MraZ (145 aa).

2 SpoVT-AbrB domains span residues 5–47 (EHQH…PLPE) and 76–119 (AVEC…AKDQ).

Belongs to the MraZ family. As to quaternary structure, forms oligomers.

It is found in the cytoplasm. Its subcellular location is the nucleoid. In Pelotomaculum thermopropionicum (strain DSM 13744 / JCM 10971 / SI), this protein is Transcriptional regulator MraZ.